A 246-amino-acid chain; its full sequence is tRNA pseudouridine synthase B (246 aa).

D44 functions as the Nucleophile in the catalytic mechanism.

This sequence belongs to the pseudouridine synthase TruB family. Type 1 subfamily.

The enzyme catalyses uridine(55) in tRNA = pseudouridine(55) in tRNA. Functionally, responsible for synthesis of pseudouridine from uracil-55 in the psi GC loop of transfer RNAs. This is tRNA pseudouridine synthase B from Desulfotalea psychrophila (strain LSv54 / DSM 12343).